The sequence spans 337 residues: Protein LEG1 homolog (337 aa).

The first 20 residues, 1-20 (MAVLASWVWVLAGCFCAAVA), serve as a signal peptide directing secretion. A glycan (N-linked (GlcNAc...) asparagine) is linked at N171.

This sequence belongs to the LEG1 family.

The protein resides in the secreted. May be involved in early liver development. The sequence is that of Protein LEG1 homolog from Mus musculus (Mouse).